The sequence spans 389 residues: MARYSLGLGLCLLVASVSAIPVDNNVEGEPEVECGPTSITVNFNTRNAFEGHVYVKGLFDQQECRNDEGGRQVAGIELPFDTCNVARTRSLNPKGVFVTTTVVVSFHPQFVTKVDRAYRVQCFYMEADKTVSTQIEVSDLTTAFQTQVVPMPICKYEILNGGPTGEPVQFATIGQQVYHKWTCDSETVDTFCAVVHSCTVDDGNGDTVQILDENGCALDKFLLNNLEYPTDLMAGQEAHVYKYADRSQLFYQCQISITVKEPNEECARPTCSEPQGFGAVKQANQTAQFFRVLKKRSAPVMENILDVRAELTTLEVLEGNLPSSLTQAQALVASREIGEDSFRQELCISSFHISVVTVFLGLTVFVAIFITYMIVSRMMVPSDKMQSAC.

The signal sequence occupies residues 1-19 (MARYSLGLGLCLLVASVSA). Residues 20–354 (IPVDNNVEGE…ELCISSFHIS (335 aa)) lie on the Extracellular side of the membrane. The ZP domain maps to 33–278 (ECGPTSITVN…PTCSEPQGFG (246 aa)). A glycan (N-linked (GlcNAc...) asparagine) is linked at Asn284. Residues 355-375 (VVTVFLGLTVFVAIFITYMIV) form a helical membrane-spanning segment. Topologically, residues 376 to 389 (SRMMVPSDKMQSAC) are cytoplasmic.

It is found in the cell membrane. Functionally, plays a role in alae formation in L1 larvae. This Caenorhabditis elegans protein is Cuticlin-3.